The following is a 493-amino-acid chain: Trigger factor (493 aa).

Residues Gly-162–Pro-243 form the PPIase FKBP-type domain. A disordered region spans residues Glu-432–Ile-493. Over residues His-449–Asp-470 the composition is skewed to basic and acidic residues. Residues Ala-474–Ala-485 are compositionally biased toward low complexity.

It belongs to the FKBP-type PPIase family. Tig subfamily.

The protein localises to the cytoplasm. The catalysed reaction is [protein]-peptidylproline (omega=180) = [protein]-peptidylproline (omega=0). Involved in protein export. Acts as a chaperone by maintaining the newly synthesized protein in an open conformation. Functions as a peptidyl-prolyl cis-trans isomerase. The protein is Trigger factor of Frankia alni (strain DSM 45986 / CECT 9034 / ACN14a).